The primary structure comprises 169 residues: Pyrophosphate-energized proton pump 1 (169 aa).

3 consecutive transmembrane segments (helical) span residues 45–65 (YVVAGLLFGGLIPYLFGGIAM), 114–134 (VIPSLLPVLAPLVVYFGVLLI), and 141–161 (AFAALGAYLLAVIMNRVLVAI).

Belongs to the H(+)-translocating pyrophosphatase (TC 3.A.10) family. As to quaternary structure, homodimer. Requires Mg(2+) as cofactor.

It localises to the cell inner membrane. It catalyses the reaction diphosphate + H2O + H(+)(in) = 2 phosphate + 2 H(+)(out). Functionally, proton pump that utilizes the energy of pyrophosphate hydrolysis as the driving force for proton movement across the membrane. Generates a proton motive force. This chain is Pyrophosphate-energized proton pump 1 (hppA1), found in Rhizobium leguminosarum bv. trifolii.